A 389-amino-acid chain; its full sequence is Succinate--CoA ligase [ADP-forming] subunit beta (389 aa).

The ATP-grasp domain occupies 9–244; sequence KQLLAEYGIP…KTQEDETEVT (236 aa). ATP is bound by residues lysine 46, 53–55, glycine 102, and glutamate 107; that span reads GRG. Residues asparagine 199 and aspartate 213 each contribute to the Mg(2+) site. Residues asparagine 264 and 321 to 323 each bind substrate; that span reads GIV.

It belongs to the succinate/malate CoA ligase beta subunit family. Heterotetramer of two alpha and two beta subunits. Requires Mg(2+) as cofactor.

The catalysed reaction is succinate + ATP + CoA = succinyl-CoA + ADP + phosphate. The enzyme catalyses GTP + succinate + CoA = succinyl-CoA + GDP + phosphate. Its pathway is carbohydrate metabolism; tricarboxylic acid cycle; succinate from succinyl-CoA (ligase route): step 1/1. Functionally, succinyl-CoA synthetase functions in the citric acid cycle (TCA), coupling the hydrolysis of succinyl-CoA to the synthesis of either ATP or GTP and thus represents the only step of substrate-level phosphorylation in the TCA. The beta subunit provides nucleotide specificity of the enzyme and binds the substrate succinate, while the binding sites for coenzyme A and phosphate are found in the alpha subunit. This Xanthomonas euvesicatoria pv. vesicatoria (strain 85-10) (Xanthomonas campestris pv. vesicatoria) protein is Succinate--CoA ligase [ADP-forming] subunit beta.